The sequence spans 191 residues: Transcription factor FapR (191 aa).

It belongs to the FapR family.

In terms of biological role, transcriptional factor involved in regulation of membrane lipid biosynthesis by repressing genes involved in fatty acid and phospholipid metabolism. The chain is Transcription factor FapR from Oceanobacillus iheyensis (strain DSM 14371 / CIP 107618 / JCM 11309 / KCTC 3954 / HTE831).